A 1525-amino-acid polypeptide reads, in one-letter code: Dicer-like protein 1 (1525 aa).

Over residues 37 to 52 (DLQEDDGSSDESDNDE) the composition is skewed to acidic residues. Residues 37 to 65 (DLQEDDGSSDESDNDEREDHSKTGVSQQR) form a disordered region. Residues 124 to 305 (LFERAKVQNT…DEATRLEKLL (182 aa)) form the Helicase ATP-binding domain. Residue 137–144 (LDTGSGKT) participates in ATP binding. Positions 250 to 253 (DEAH) match the DEAH box motif. The Helicase C-terminal domain occupies 439–605 (QLSPKVQVLR…SFCRTLPEDR (167 aa)). Residues 641–731 (ATAILARYAS…NSIYHRRLPA (91 aa)) form the Dicer dsRNA-binding fold domain. The 129-residue stretch at 881 to 1009 (ESLTYVRDND…ICIEPLKVSA (129 aa)) folds into the PAZ domain. RNase III domains lie at 1032–1192 (LISL…LSGG) and 1243–1394 (SRKI…VDSD). Mg(2+)-binding residues include Glu-1283, Asp-1380, and Glu-1383. Positions 1428-1496 (TFLHNRLTNE…SEKALAVLDE (69 aa)) constitute a DRBM domain. 4 residues coordinate Zn(2+): Cys-1440, His-1467, Cys-1508, and Cys-1510.

Belongs to the helicase family. Dicer subfamily. Mg(2+) is required as a cofactor. The cofactor is Mn(2+).

Its function is as follows. Dicer-like endonuclease involved in cleaving double-stranded RNA in the RNA interference (RNAi) pathway. Produces 21 to 25 bp dsRNAs (siRNAs) which target the selective destruction of homologous RNAs leading to sequence-specific suppression of gene expression, called post-transcriptional gene silencing (PTGS). Part of a broad host defense response against viral infection and transposons. This is Dicer-like protein 1 (dcl1) from Aspergillus niger (strain ATCC MYA-4892 / CBS 513.88 / FGSC A1513).